A 930-amino-acid chain; its full sequence is Protein translocase subunit SecA (930 aa).

ATP is bound by residues Gln83, 101–105 (GEGKT), and Asp491.

The protein belongs to the SecA family. As to quaternary structure, monomer and homodimer. Part of the essential Sec protein translocation apparatus which comprises SecA, SecYEG and auxiliary proteins SecDF. Other proteins may also be involved.

Its subcellular location is the cell inner membrane. The protein resides in the cellular thylakoid membrane. It localises to the cytoplasm. It carries out the reaction ATP + H2O + cellular proteinSide 1 = ADP + phosphate + cellular proteinSide 2.. In terms of biological role, part of the Sec protein translocase complex. Interacts with the SecYEG preprotein conducting channel. Has a central role in coupling the hydrolysis of ATP to the transfer of proteins into and across the cell membrane, serving as an ATP-driven molecular motor driving the stepwise translocation of polypeptide chains across the membrane. Probably participates in protein translocation into and across both the cytoplasmic and thylakoid membranes in cyanobacterial cells. The polypeptide is Protein translocase subunit SecA (Trichormus variabilis (strain ATCC 29413 / PCC 7937) (Anabaena variabilis)).